The primary structure comprises 337 residues: Glyceraldehyde-3-phosphate dehydrogenase (337 aa).

NAD(+) is bound by residues 12–13 (RI), aspartate 34, and lysine 79. D-glyceraldehyde 3-phosphate contacts are provided by residues 150-152 (SCT), threonine 181, 210-211 (TG), and arginine 233. The active-site Nucleophile is the cysteine 151. Asparagine 315 is a binding site for NAD(+).

This sequence belongs to the glyceraldehyde-3-phosphate dehydrogenase family. As to quaternary structure, homotetramer.

The protein localises to the cytoplasm. The catalysed reaction is D-glyceraldehyde 3-phosphate + phosphate + NAD(+) = (2R)-3-phospho-glyceroyl phosphate + NADH + H(+). Its pathway is carbohydrate degradation; glycolysis; pyruvate from D-glyceraldehyde 3-phosphate: step 1/5. The sequence is that of Glyceraldehyde-3-phosphate dehydrogenase (GPD1) from Cochliobolus heterostrophus (Southern corn leaf blight fungus).